The chain runs to 415 residues: Glutamate-1-semialdehyde 2,1-aminomutase (415 aa).

K260 carries the N6-(pyridoxal phosphate)lysine modification.

Belongs to the class-III pyridoxal-phosphate-dependent aminotransferase family. HemL subfamily. The cofactor is pyridoxal 5'-phosphate.

The protein localises to the cytoplasm. The catalysed reaction is (S)-4-amino-5-oxopentanoate = 5-aminolevulinate. Its pathway is porphyrin-containing compound metabolism; protoporphyrin-IX biosynthesis; 5-aminolevulinate from L-glutamyl-tRNA(Glu): step 2/2. This Methanoculleus marisnigri (strain ATCC 35101 / DSM 1498 / JR1) protein is Glutamate-1-semialdehyde 2,1-aminomutase.